The following is a 274-amino-acid chain: Large ribosomal subunit protein uL2cz/uL2cy (274 aa).

Disordered stretches follow at residues 1 to 22 (MAIH…DSQV) and 225 to 274 (PVDH…RRSK).

It belongs to the universal ribosomal protein uL2 family. As to quaternary structure, part of the 50S ribosomal subunit.

Its subcellular location is the plastid. The protein resides in the chloroplast. In Arabis hirsuta (Hairy rock-cress), this protein is Large ribosomal subunit protein uL2cz/uL2cy (rpl2-A).